Consider the following 290-residue polypeptide: Protein male abnormal 3 (290 aa).

2 consecutive DNA-binding regions (DM) follow at residues 28–74 (CQRC…SKKK) and 94–142 (CARC…KLRR). 2 disordered regions span residues 139–167 (KLRR…MDME) and 179–202 (IIGT…LSMS). The segment covering 146 to 155 (KSRDGKEPKR) has biased composition (basic and acidic residues). Residues 182-202 (TSASPSPSSTTDTMSPSLSMS) show a composition bias toward low complexity.

As to expression, expression is undetectable in hermaphrodites, but persists in males. In males, expressed in cells of the tail tip.

The protein localises to the nucleus. In terms of biological role, transcription factor which binds the DNA motif 5'-[CGA][TCA][TA]ACAATGT[AT][TGA]C-3', probably as a monomer. Acts partially redundantly with the transcription factor dmd-3 to coordinate tail tip cell fusion and retraction and thereby regulate male tail tip morphogenesis. Promotes male-specific development of two tissues, the peripheral nervous system and the intestine. In the peripheral nervous system, directs differentiation of sensory ray neuroblasts into peripheral sense organs. In the intestine, causes repression of vitellogenin gene transcription. The protein is Protein male abnormal 3 of Caenorhabditis elegans.